Here is a 59-residue protein sequence, read N- to C-terminus: Movement protein TGBp3 (59 aa).

Residues 1 to 3 are Lumenal-facing; the sequence is MHL. Residues 4 to 21 traverse the membrane as a helical segment; sequence AIVGALTLVLTLFVLHYT. Residues 22–59 lie on the Cytoplasmic side of the membrane; sequence TKDDRCYILINGHSAFTNCPASPDLAKVISQLKPHNHG.

Belongs to the Tymovirales TGBp3 protein family.

Its subcellular location is the host endoplasmic reticulum membrane. Plays a role in viral cell-to-cell propagation, by facilitating genome transport to neighboring plant cells through plasmosdesmata. May induce the formation of granular vesicles derived from the Endoplasmic reticulum, which align on actin filaments. The polypeptide is Movement protein TGBp3 (Chenopodium album (Fat hen)).